A 188-amino-acid chain; its full sequence is Crossover junction endodeoxyribonuclease RuvC (188 aa).

Active-site residues include aspartate 7, glutamate 68, and aspartate 141. Mg(2+) is bound by residues aspartate 7, glutamate 68, and aspartate 141.

The protein belongs to the RuvC family. In terms of assembly, homodimer which binds Holliday junction (HJ) DNA. The HJ becomes 2-fold symmetrical on binding to RuvC with unstacked arms; it has a different conformation from HJ DNA in complex with RuvA. In the full resolvosome a probable DNA-RuvA(4)-RuvB(12)-RuvC(2) complex forms which resolves the HJ. It depends on Mg(2+) as a cofactor.

Its subcellular location is the cytoplasm. It catalyses the reaction Endonucleolytic cleavage at a junction such as a reciprocal single-stranded crossover between two homologous DNA duplexes (Holliday junction).. The RuvA-RuvB-RuvC complex processes Holliday junction (HJ) DNA during genetic recombination and DNA repair. Endonuclease that resolves HJ intermediates. Cleaves cruciform DNA by making single-stranded nicks across the HJ at symmetrical positions within the homologous arms, yielding a 5'-phosphate and a 3'-hydroxyl group; requires a central core of homology in the junction. The consensus cleavage sequence is 5'-(A/T)TT(C/G)-3'. Cleavage occurs on the 3'-side of the TT dinucleotide at the point of strand exchange. HJ branch migration catalyzed by RuvA-RuvB allows RuvC to scan DNA until it finds its consensus sequence, where it cleaves and resolves the cruciform DNA. The protein is Crossover junction endodeoxyribonuclease RuvC of Mycobacterium avium (strain 104).